We begin with the raw amino-acid sequence, 254 residues long: RING-H2 finger protein ATL28 (254 aa).

A helical membrane pass occupies residues 25-45; the sequence is VVLTGVLLFVIFAGFFSLFLW. The RING-type; atypical zinc-finger motif lies at 103–145; it reads CAICLSEFSDEDTVRLITVCRHPFHSNCIDLWFELHKTCPVCR.

The protein belongs to the RING-type zinc finger family. ATL subfamily.

The protein resides in the membrane. The enzyme catalyses S-ubiquitinyl-[E2 ubiquitin-conjugating enzyme]-L-cysteine + [acceptor protein]-L-lysine = [E2 ubiquitin-conjugating enzyme]-L-cysteine + N(6)-ubiquitinyl-[acceptor protein]-L-lysine.. It functions in the pathway protein modification; protein ubiquitination. The protein is RING-H2 finger protein ATL28 (ATL28) of Arabidopsis thaliana (Mouse-ear cress).